The chain runs to 297 residues: Vesicular-fusion protein SEC17 (297 aa).

It belongs to the SNAP family.

It localises to the membrane. Functionally, required for vesicular transport between the endoplasmic reticulum and the Golgi apparatus. This Komagataella phaffii (strain GS115 / ATCC 20864) (Yeast) protein is Vesicular-fusion protein SEC17 (SEC17).